The following is a 472-amino-acid chain: Interferon-induced protein with tetratricopeptide repeats 2 (472 aa).

At S2 the chain carries N-acetylserine. TPR repeat units lie at residues 51–89 (ATMC…ADQA), 90–135 (EIRS…RIES), 136–171 (PELD…KPKN), 172–208 (PEFT…NPDN), 247–280 (TDVL…IPNN), 281–335 (AYLH…NLFR), 336–366 (VCSI…KELT), 367–405 (PVAK…NQKS), and 406–448 (REKE…KMQQ). The interval 446 to 472 (MQQADEDSERGLESGSLIPSASSWNGE) is disordered. Residues 462–472 (LIPSASSWNGE) show a composition bias toward polar residues.

Belongs to the IFIT family. Domain-swapped homodimer. Component of an interferon-dependent multiprotein complex, at least composed of IFIT1, IFIT2 and IFIT3. Interacts with IFIT1 and IFIT3. Interacts with STING1/MITA and disrupts its interaction with MAVS or TBK1. Interacts with EIF3E and EIF3C.

The protein resides in the cytoplasm. Its subcellular location is the endoplasmic reticulum. Functionally, IFN-induced antiviral protein which inhibits expression of viral messenger RNAs lacking 2'-O-methylation of the 5' cap. The ribose 2'-O-methylation would provide a molecular signature to distinguish between self and non-self mRNAs by the host during viral infection. Viruses evolved several ways to evade this restriction system such as encoding their own 2'-O-methylase for their mRNAs or by stealing host cap containing the 2'-O-methylation (cap snatching mechanism). Binds AU-rich viral RNAs, with or without 5' triphosphorylation, RNA-binding is required for antiviral activity. Can promote apoptosis. The chain is Interferon-induced protein with tetratricopeptide repeats 2 (IFIT2) from Homo sapiens (Human).